We begin with the raw amino-acid sequence, 278 residues long: Nucleotide-binding protein Tlet_0523 (278 aa).

9-16 contributes to the ATP binding site; the sequence is GLSGAGKS. 58 to 61 provides a ligand contact to GTP; it reads DIRS.

It belongs to the RapZ-like family.

In terms of biological role, displays ATPase and GTPase activities. The protein is Nucleotide-binding protein Tlet_0523 of Pseudothermotoga lettingae (strain ATCC BAA-301 / DSM 14385 / NBRC 107922 / TMO) (Thermotoga lettingae).